We begin with the raw amino-acid sequence, 340 residues long: Beta-hexosaminidase (340 aa).

Residues D60, R68, R127, and 157–158 (KH) contribute to the substrate site. H170 serves as the catalytic Proton donor/acceptor. D242 serves as the catalytic Nucleophile.

It belongs to the glycosyl hydrolase 3 family. NagZ subfamily.

The protein localises to the cytoplasm. The catalysed reaction is Hydrolysis of terminal non-reducing N-acetyl-D-hexosamine residues in N-acetyl-beta-D-hexosaminides.. It functions in the pathway cell wall biogenesis; peptidoglycan recycling. In terms of biological role, plays a role in peptidoglycan recycling by cleaving the terminal beta-1,4-linked N-acetylglucosamine (GlcNAc) from peptide-linked peptidoglycan fragments, giving rise to free GlcNAc, anhydro-N-acetylmuramic acid and anhydro-N-acetylmuramic acid-linked peptides. This chain is Beta-hexosaminidase, found in Glaesserella parasuis serovar 5 (strain SH0165) (Haemophilus parasuis).